A 676-amino-acid polypeptide reads, in one-letter code: MSFFWLFPFLLHLSFADSLSPLSAPVQNFIHLNHSCPSSILTYSRNSTYFTNLKTLLSSLSSRNASYSTGFQTATAGQAPDRVTGLFLCRGDVSQEVCRNCVAFSVKETLYWCPYNKEVVLYYDECMLRYSHRNILSTVTYDGSAILLNGANISSSNQNQVDEFRDLVSSTLNLAAVEAANSSKKFYTRKVITPQPLYLLVQCTPDLTRQDCLRCLQKSIKGMSLYRIGGRFFYPSCNSRYENYSFYNETATRSSSPPSLPPRSTPQQQLKLAPPPLISERGKGRNSSVIIVVVVPIIALLLLFVAFFSLRAKKTRTNYEREPLTEESDDITTAGSLQFDFKAIEAATNKFCETNKLGQGGFGEVYKGIFPSGVQVAVKRLSKTSGQGEREFANEVIVVAKLQHRNLVRLLGFCLERDERILVYEFVPNKSLDYFIFDSTMQSLLDWTRRYKIIGGIARGILYLHQDSRLTIIHRDLKAGNILLGDDMNAKIADFGMARIFGMDQTEANTRRIVGTYGYMSPEYAMYGQFSMKSDVYSFGVLVLEIISGKKNSNVYQMDGTSAGNLVTYTWRLWSNGSPLELVDPSFRDNYRINEVSRCIHIALLCVQEEAEDRPTMSAIVQMLTTSSIALAVPQRPGFFFRSSKHEQVGLVDRLSINTSALCSVDDASITNVTPR.

A signal peptide spans 1–16 (MSFFWLFPFLLHLSFA). The Extracellular segment spans residues 17 to 287 (DSLSPLSAPV…ISERGKGRNS (271 aa)). 2 Gnk2-homologous domains span residues 31 to 135 (HLNH…HRNI) and 146 to 246 (ILLN…NYSF). 7 N-linked (GlcNAc...) asparagine glycosylation sites follow: Asn-33, Asn-46, Asn-64, Asn-152, Asn-181, Asn-243, and Asn-248. Residues 252–279 (TRSSSPPSLPPRSTPQQQLKLAPPPLIS) are disordered. An N-linked (GlcNAc...) asparagine glycan is attached at Asn-286. A helical membrane pass occupies residues 288 to 308 (SVIIVVVVPIIALLLLFVAFF). Residues 309–676 (SLRAKKTRTN…DASITNVTPR (368 aa)) lie on the Cytoplasmic side of the membrane. In terms of domain architecture, Protein kinase spans 351–631 (FCETNKLGQG…QMLTTSSIAL (281 aa)). Residues 357–365 (LGQGGFGEV) and Lys-379 contribute to the ATP site. Position 424 is a phosphotyrosine (Tyr-424). Asp-476 functions as the Proton acceptor in the catalytic mechanism. Thr-516 carries the phosphothreonine modification. Tyr-524 carries the phosphotyrosine modification.

The protein belongs to the protein kinase superfamily. Ser/Thr protein kinase family. CRK subfamily.

It is found in the membrane. The enzyme catalyses L-seryl-[protein] + ATP = O-phospho-L-seryl-[protein] + ADP + H(+). It carries out the reaction L-threonyl-[protein] + ATP = O-phospho-L-threonyl-[protein] + ADP + H(+). This Arabidopsis thaliana (Mouse-ear cress) protein is Cysteine-rich receptor-like protein kinase 4 (CRK4).